Reading from the N-terminus, the 380-residue chain is Ribosomal RNA large subunit methyltransferase G (380 aa).

Belongs to the methyltransferase superfamily. RlmG family.

The protein localises to the cytoplasm. The catalysed reaction is guanosine(1835) in 23S rRNA + S-adenosyl-L-methionine = N(2)-methylguanosine(1835) in 23S rRNA + S-adenosyl-L-homocysteine + H(+). Specifically methylates the guanine in position 1835 (m2G1835) of 23S rRNA. The chain is Ribosomal RNA large subunit methyltransferase G from Aeromonas hydrophila subsp. hydrophila (strain ATCC 7966 / DSM 30187 / BCRC 13018 / CCUG 14551 / JCM 1027 / KCTC 2358 / NCIMB 9240 / NCTC 8049).